The sequence spans 532 residues: Light-independent protochlorophyllide reductase subunit B (532 aa).

Asp36 contacts [4Fe-4S] cluster. Asp318 serves as the catalytic Proton donor. 453–454 serves as a coordination point for substrate; sequence GM.

This sequence belongs to the ChlB/BchB/BchZ family. Protochlorophyllide reductase is composed of three subunits; ChlL, ChlN and ChlB. Forms a heterotetramer of two ChlB and two ChlN subunits. The cofactor is [4Fe-4S] cluster.

The protein resides in the plastid. It localises to the chloroplast. It carries out the reaction chlorophyllide a + oxidized 2[4Fe-4S]-[ferredoxin] + 2 ADP + 2 phosphate = protochlorophyllide a + reduced 2[4Fe-4S]-[ferredoxin] + 2 ATP + 2 H2O. Its pathway is porphyrin-containing compound metabolism; chlorophyll biosynthesis (light-independent). Its function is as follows. Component of the dark-operative protochlorophyllide reductase (DPOR) that uses Mg-ATP and reduced ferredoxin to reduce ring D of protochlorophyllide (Pchlide) to form chlorophyllide a (Chlide). This reaction is light-independent. The NB-protein (ChlN-ChlB) is the catalytic component of the complex. The sequence is that of Light-independent protochlorophyllide reductase subunit B from Tetradesmus obliquus (Green alga).